Here is a 325-residue protein sequence, read N- to C-terminus: Siroheme decarboxylase NirDL subunit (325 aa).

This sequence belongs to the Ahb/Nir family. Forms a complex composed of NirDL, NirG and NirH. All proteins are required for the total conversion of siroheme to didecarboxysiroheme.

It catalyses the reaction siroheme + 2 H(+) = 12,18-didecarboxysiroheme + 2 CO2. It functions in the pathway porphyrin-containing compound metabolism. Its function is as follows. Involved in heme d1 biosynthesis. Catalyzes the decarboxylation of siroheme into didecarboxysiroheme. The sequence is that of Siroheme decarboxylase NirDL subunit from Paracoccus denitrificans (strain Pd 1222).